Consider the following 97-residue polypeptide: Serine protease inhibitor Kazal-type 13 (97 aa).

The signal sequence occupies residues 1–26 (MTRRGCWPHRIIFSLILLTWTHVTLA). Residues 36 to 97 (NWPKPPCKMY…IEFVKYGKCE (62 aa)) form the Kazal-like domain. 3 cysteine pairs are disulfide-bonded: C42–C78, C56–C75, and C64–C96.

Restricted to the epididymis, with highest levels in the initial segment, including epithelial cells, lumen, and sperm (at protein level). Localizes to the sperm heads, where it is restricted to the acrosomal region in epididymal spermatozoa, but not in testicular spermatozoa (at protein level).

It localises to the secreted. In terms of biological role, may be a serine protease inhibitor. Essential for sperm maturation and fertility. Inhibits sperm acrosome reaction, protecting sperm from premature reaction. This is Serine protease inhibitor Kazal-type 13 (Spink13) from Rattus norvegicus (Rat).